We begin with the raw amino-acid sequence, 186 residues long: Inner membrane-spanning protein YciB (186 aa).

The next 6 helical transmembrane spans lie at Phe-3–Tyr-23, Val-24–His-44, Ala-49–His-69, Trp-76–Leu-96, Leu-121–Phe-141, and Phe-149–Leu-169.

The protein belongs to the YciB family.

It localises to the cell inner membrane. Functionally, plays a role in cell envelope biogenesis, maintenance of cell envelope integrity and membrane homeostasis. This chain is Inner membrane-spanning protein YciB, found in Ralstonia nicotianae (strain ATCC BAA-1114 / GMI1000) (Ralstonia solanacearum).